Reading from the N-terminus, the 389-residue chain is Na(+)/H(+) antiporter NhaA (389 aa).

11 helical membrane passes run I17–L37, L59–V79, S95–F115, V124–L144, V154–F174, S177–L197, L213–I233, F261–L281, P287–F307, I328–L348, and L363–V383.

Belongs to the NhaA Na(+)/H(+) (TC 2.A.33) antiporter family.

It localises to the cell inner membrane. The enzyme catalyses Na(+)(in) + 2 H(+)(out) = Na(+)(out) + 2 H(+)(in). Functionally, na(+)/H(+) antiporter that extrudes sodium in exchange for external protons. The polypeptide is Na(+)/H(+) antiporter NhaA (Shewanella sp. (strain ANA-3)).